The primary structure comprises 26 residues: AINSESGVRSVVPQPCNALPNQGPEK.

The tract at residues 1–26 (AINSESGVRSVVPQPCNALPNQGPEK) is disordered.

The sequence is that of Unknown protein 16 from Pseudotsuga menziesii (Douglas-fir).